The chain runs to 613 residues: Serine protease FAM111A (613 aa).

The disordered stretch occupies residues 1-72 (MSCKKRKSQI…TRQDQTPPLN (72 aa)). Lysine 19 is covalently cross-linked (Glycyl lysine isopeptide (Lys-Gly) (interchain with G-Cter in SUMO2)). Serine 25 is modified (phosphoserine). Residue lysine 29 forms a Glycyl lysine isopeptide (Lys-Gly) (interchain with G-Cter in SUMO2) linkage. Residues 40–56 (VDSKKMPRDITNTRDQR) are compositionally biased toward basic and acidic residues. Lysine 62 participates in a covalent cross-link: Glycyl lysine isopeptide (Lys-Gly) (interchain with G-Cter in SUMO2). Residues histidine 383, aspartate 437, and serine 543 each act as charge relay system in the active site.

It belongs to the FAM111 family. In terms of assembly, interacts (via PIP-box) with PCNA; this interaction is direct. In terms of processing, autocatalytically cleaved; autocatalytic cleavage takes place in trans.

It is found in the nucleus. The protein resides in the chromosome. It localises to the cytoplasm. Single-stranded DNA-binding serine protease that mediates the proteolytic cleavage of covalent DNA-protein cross-links (DPCs) during DNA synthesis, thereby playing a key role in maintaining genomic integrity. DPCs are highly toxic DNA lesions that interfere with essential chromatin transactions, such as replication and transcription, and which are induced by reactive agents, such as UV light or formaldehyde. Protects replication fork from stalling by removing DPCs, such as covalently trapped topoisomerase 1 (TOP1) adducts on DNA lesion, or poly(ADP-ribose) polymerase 1 (PARP1)-DNA complexes trapped by PARP inhibitors. Required for PCNA loading on replication sites. Promotes S-phase entry and DNA synthesis. This is Serine protease FAM111A from Mus musculus (Mouse).